We begin with the raw amino-acid sequence, 396 residues long: NADH-quinone oxidoreductase subunit D 2 (396 aa).

This sequence belongs to the complex I 49 kDa subunit family. As to quaternary structure, NDH-1 is composed of 14 different subunits. Subunits NuoB, C, D, E, F, and G constitute the peripheral sector of the complex.

The protein resides in the cell inner membrane. The enzyme catalyses a quinone + NADH + 5 H(+)(in) = a quinol + NAD(+) + 4 H(+)(out). In terms of biological role, NDH-1 shuttles electrons from NADH, via FMN and iron-sulfur (Fe-S) centers, to quinones in the respiratory chain. The immediate electron acceptor for the enzyme in this species is believed to be ubiquinone. Couples the redox reaction to proton translocation (for every two electrons transferred, four hydrogen ions are translocated across the cytoplasmic membrane), and thus conserves the redox energy in a proton gradient. This is NADH-quinone oxidoreductase subunit D 2 from Beijerinckia indica subsp. indica (strain ATCC 9039 / DSM 1715 / NCIMB 8712).